A 219-amino-acid polypeptide reads, in one-letter code: Phosphate-specific transport system accessory protein PhoU homolog 1 (219 aa).

Belongs to the PhoU family. As to quaternary structure, homodimer.

It localises to the cytoplasm. In terms of biological role, plays a role in the regulation of phosphate uptake. This chain is Phosphate-specific transport system accessory protein PhoU homolog 1, found in Methanothermobacter thermautotrophicus (strain ATCC 29096 / DSM 1053 / JCM 10044 / NBRC 100330 / Delta H) (Methanobacterium thermoautotrophicum).